We begin with the raw amino-acid sequence, 270 residues long: Putative ABC transporter ATP-binding protein MG304 homolog (270 aa).

Positions 2-232 (LNVTNLSFTY…LHLFHQHHFT (231 aa)) constitute an ABC transporter domain. Residue 36–43 (GHNGSGKS) coordinates ATP.

The protein belongs to the ABC transporter superfamily.

This chain is Putative ABC transporter ATP-binding protein MG304 homolog, found in Mycoplasma pneumoniae (strain ATCC 29342 / M129 / Subtype 1) (Mycoplasmoides pneumoniae).